We begin with the raw amino-acid sequence, 197 residues long: Glycerol-3-phosphate acyltransferase (197 aa).

5 consecutive transmembrane segments (helical) span residues 2–22 (LDVI…AIVV), 53–73 (AGIT…LAWL), 78–98 (PVVA…PVYF), 112–132 (VILA…LAVA), and 152–174 (YMLW…AAIV).

Belongs to the PlsY family. As to quaternary structure, probably interacts with PlsX.

The protein resides in the cell inner membrane. The enzyme catalyses an acyl phosphate + sn-glycerol 3-phosphate = a 1-acyl-sn-glycero-3-phosphate + phosphate. Its pathway is lipid metabolism; phospholipid metabolism. Catalyzes the transfer of an acyl group from acyl-phosphate (acyl-PO(4)) to glycerol-3-phosphate (G3P) to form lysophosphatidic acid (LPA). This enzyme utilizes acyl-phosphate as fatty acyl donor, but not acyl-CoA or acyl-ACP. This is Glycerol-3-phosphate acyltransferase from Halorhodospira halophila (strain DSM 244 / SL1) (Ectothiorhodospira halophila (strain DSM 244 / SL1)).